The sequence spans 280 residues: Large ribosomal subunit protein uL2 (280 aa).

Disordered regions lie at residues 1-59 (MAIR…GGHK) and 223-280 (GVVM…NKKR). Residues 23–33 (ELTRSTPEKSL) show a composition bias toward basic and acidic residues. Basic residues-rich tracts occupy residues 36–59 (PLHKTGGRNVHGHITTRHKGGGHK) and 269–280 (VRRRRSNKNKKR).

The protein belongs to the universal ribosomal protein uL2 family. Part of the 50S ribosomal subunit. Forms a bridge to the 30S subunit in the 70S ribosome.

Its function is as follows. One of the primary rRNA binding proteins. Required for association of the 30S and 50S subunits to form the 70S ribosome, for tRNA binding and peptide bond formation. It has been suggested to have peptidyltransferase activity; this is somewhat controversial. Makes several contacts with the 16S rRNA in the 70S ribosome. The protein is Large ribosomal subunit protein uL2 of Corynebacterium kroppenstedtii (strain DSM 44385 / JCM 11950 / CIP 105744 / CCUG 35717).